Here is a 32-residue protein sequence, read N- to C-terminus: Cytochrome b6-f complex subunit 7 (32 aa).

Residues 9-27 form a helical membrane-spanning segment; it reads AALFWVLIPLGLAGGALLL.

Belongs to the PetM family. The 4 large subunits of the cytochrome b6-f complex are cytochrome b6, subunit IV (17 kDa polypeptide, PetD), cytochrome f and the Rieske protein, while the 4 small subunits are PetG, PetL, PetM and PetN. The complex functions as a dimer.

It localises to the cellular thylakoid membrane. Its function is as follows. Component of the cytochrome b6-f complex, which mediates electron transfer between photosystem II (PSII) and photosystem I (PSI), cyclic electron flow around PSI, and state transitions. This Synechococcus sp. (strain RCC307) protein is Cytochrome b6-f complex subunit 7.